The chain runs to 365 residues: Probable flavin mononucleotide-dependent alkene reductase (365 aa).

FMN contacts are provided by residues 30–32 (PLT), A63, and Q105. Y191 functions as the Proton donor in the catalytic mechanism. FMN contacts are provided by residues R238, S303, and 324-325 (GT).

The protein belongs to the NADH:flavin oxidoreductase/NADH oxidase family. Monomer. FMN serves as cofactor.

The protein resides in the cytoplasm. Its subcellular location is the cytosol. Its function is as follows. May function as a flavin mononucleotide (FMN)-dependent alkene reductase on substrates carrying alpha,beta-unsaturated carbonyl groups (ketones, aldehydes, carboxylic acids, esters, lactones or cyclic imides). The catalysis depends on NAD(P)H, which acts as a hydride donor for the reduction. Seems to be involved in metabolic pathways required for efficient replication of amastigotes within macrophages. Acts as a FMN-dependent nitroreductase that activates anti-leishmanial bicyclic nitroaromatic prodrugs including delamanid, DNDI-VL-2098 and (R)-PA-824, forming toxic products that kill the parasites. The sequence is that of Probable flavin mononucleotide-dependent alkene reductase from Leishmania infantum.